Consider the following 196-residue polypeptide: Oocyte zinc finger protein XlCOF26 (196 aa).

7 consecutive C2H2-type zinc fingers follow at residues 6–28 (YSCT…QKNH), 34–56 (FTCT…QRIH), 62–84 (FTCT…QRIH), 90–112 (FTCT…HKIH), 118–140 (FTCP…QRTH), 146–168 (FTCT…QSTH), and 174–196 (FTCT…QMTH).

This sequence belongs to the krueppel C2H2-type zinc-finger protein family.

It is found in the nucleus. Its function is as follows. May be involved in transcriptional regulation. In Xenopus laevis (African clawed frog), this protein is Oocyte zinc finger protein XlCOF26.